Here is a 348-residue protein sequence, read N- to C-terminus: GMP reductase (348 aa).

108–131 serves as a coordination point for NADP(+); the sequence is ADFQKTKDVMALSDELIFICIDIA. The K(+) site is built by Gly-181 and Gly-183. Cys-186 acts as the Thioimidate intermediate in catalysis. 216–239 serves as a coordination point for NADP(+); sequence IIGDGGCACAGDVAKAFGGGADFV.

The protein belongs to the IMPDH/GMPR family. GuaC type 1 subfamily. Homotetramer.

It catalyses the reaction IMP + NH4(+) + NADP(+) = GMP + NADPH + 2 H(+). Functionally, catalyzes the irreversible NADPH-dependent deamination of GMP to IMP. It functions in the conversion of nucleobase, nucleoside and nucleotide derivatives of G to A nucleotides, and in maintaining the intracellular balance of A and G nucleotides. The sequence is that of GMP reductase from Vibrio vulnificus (strain CMCP6).